Reading from the N-terminus, the 824-residue chain is Silver exporting P-type ATPase (824 aa).

The disordered stretch occupies residues 89 to 112; that stretch reads ASEHHHHHDHHEVSPDKIKQSHRQ. The span at 98 to 112 shows a compositional bias: basic and acidic residues; it reads HHEVSPDKIKQSHRQ. A run of 6 helical transmembrane segments spans residues 167-187, 200-220, 234-254, 268-288, 427-447, and 455-475; these read FWLG…SHLF, TWLQ…PFFA, FTLV…ATVF, LVAI…LGQV, WFVP…SVWG, and GLIA…GLAT. D511 serves as the catalytic 4-aspartylphosphate intermediate. 2 helical membrane-spanning segments follow: residues 764 to 784 and 785 to 805; these read IRQN…VAAG and LLYP…AMAL.

It belongs to the cation transport ATPase (P-type) (TC 3.A.3) family. Type IB subfamily.

Its subcellular location is the cell membrane. It catalyses the reaction Ag(+)(in) + ATP + H2O = Ag(+)(out) + ADP + phosphate + H(+). In terms of biological role, component of the sil cation-efflux system that confers resistance to silver. The polypeptide is Silver exporting P-type ATPase (silP) (Salmonella typhimurium).